The primary structure comprises 259 residues: Sugar fermentation stimulation protein homolog (259 aa).

This sequence belongs to the SfsA family.

The protein is Sugar fermentation stimulation protein homolog of Prochlorococcus marinus (strain MIT 9303).